The sequence spans 181 residues: Protein CRABS CLAW (181 aa).

A C4-type zinc finger spans residues 26–53 (CSICNTILAVGIPLKRMLDTVTVKCGHC). The disordered stretch occupies residues 80-122 (GSDYKKGSSSSSSSSTSSDQPPSPSPPFVVKPPEKKQRLPSAY). Positions 87–99 (SSSSSSSSTSSDQ) are enriched in low complexity. The segment covering 100-109 (PPSPSPPFVV) has biased composition (pro residues).

The protein belongs to the YABBY family. In terms of tissue distribution, restricted to flowers, mostly in carpels and nectaries. Expressed at low levels in sepal primordia (buds), sepal receptacle and developing petal. Not detected in placental tissues, septum, stigma and ovules.

Its subcellular location is the nucleus. Functionally, transcription factor required for the initiation of nectary development. Also involved in suppressing early radial growth of the gynoecium, in promoting its later elongation and in fusion of its carpels by regulating both cell division and expansion. Establishes the polar differentiation in the carpels by specifying abaxial cell fate in the ovary wall. Regulates both cell division and expansion. This is Protein CRABS CLAW from Arabidopsis thaliana (Mouse-ear cress).